Here is a 405-residue protein sequence, read N- to C-terminus: DNA polymerase IV 1 (405 aa).

One can recognise a UmuC domain in the interval 23–203 (IAHIDCDAFY…RPVTTIWGVG (181 aa)). Positions 27 and 120 each coordinate Mg(2+). E121 is an active-site residue.

The protein belongs to the DNA polymerase type-Y family. In terms of assembly, monomer. Mg(2+) is required as a cofactor.

The protein localises to the cytoplasm. The enzyme catalyses DNA(n) + a 2'-deoxyribonucleoside 5'-triphosphate = DNA(n+1) + diphosphate. Its function is as follows. Poorly processive, error-prone DNA polymerase involved in untargeted mutagenesis. Copies undamaged DNA at stalled replication forks, which arise in vivo from mismatched or misaligned primer ends. These misaligned primers can be extended by PolIV. Exhibits no 3'-5' exonuclease (proofreading) activity. May be involved in translesional synthesis, in conjunction with the beta clamp from PolIII. This Agrobacterium fabrum (strain C58 / ATCC 33970) (Agrobacterium tumefaciens (strain C58)) protein is DNA polymerase IV 1 (dinB1).